The chain runs to 895 residues: Androgen receptor (895 aa).

The interval 1 to 533 (MEVQLGLGRV…PIDYYFPPQK (533 aa)) is modulating. Residues 1–562 (MEVQLGLGRV…GSCKVFFKRA (562 aa)) form an interaction with ZNF318 region. Disordered stretches follow at residues 33-150 (VIQN…LSLL) and 178-211 (QQQQ…YLEG). Composition is skewed to low complexity over residues 44-81 (AASA…GSPQ) and 178-200 (QQQQ…ASGA). S65 bears the Phosphoserine; by CDK9 mark. S79 is modified (phosphoserine). Residues 201–211 (PTSSKDNYLEG) are compositionally biased toward polar residues. At Y208 the chain carries Phosphotyrosine; by CSK. S241 bears the Phosphoserine mark. Y252 carries the post-translational modification Phosphotyrosine; by CSK and TNK2. Y292, Y331, Y342, and Y347 each carry phosphotyrosine; by CSK. The residue at position 348 (Y348) is a Phosphotyrosine; by CSK and TNK2. K371 participates in a covalent cross-link: Glycyl lysine isopeptide (Lys-Gly) (interchain with G-Cter in SUMO). The residue at position 378 (Y378) is a Phosphotyrosine; by CSK. Residue K496 forms a Glycyl lysine isopeptide (Lys-Gly) (interchain with G-Cter in SUMO) linkage. 2 positions are modified to phosphotyrosine; by CSK: Y510 and Y527. The segment at 527–894 (YYFPPQKTCL…GKVKPIYFHT (368 aa)) is interaction with LPXN. Positions 534-607 (TCLICGDEAS…AGMTLGARKL (74 aa)) form a DNA-binding region, nuclear receptor. 2 consecutive NR C4-type zinc fingers follow at residues 535 to 555 (CLIC…CGSC) and 571 to 595 (CASR…LRKC). The interval 547–637 (YGALTCGSCK…TEETAQKLTV (91 aa)) is interaction with HIPK3. The interaction with CCAR1 stretch occupies residues 567–894 (QKYLCASRND…GKVKPIYFHT (328 aa)). An interaction with KAT7 region spans residues 600–894 (MTLGARKLKK…GKVKPIYFHT (295 aa)). A Phosphoserine; by STK4/MST1 modification is found at S626. Positions 644-875 (ECQPIFLNVL…DFPEMMAEII (232 aa)) constitute an NR LBD domain. 17beta-hydroxy-5alpha-androstan-3-one contacts are provided by N681 and R728. Residues K821 and K823 each participate in a glycyl lysine isopeptide (Lys-Gly) (interchain with G-Cter in ubiquitin) cross-link. Residue T853 participates in 17beta-hydroxy-5alpha-androstan-3-one binding. Residue Y891 is modified to Phosphotyrosine; by CSK.

The protein belongs to the nuclear hormone receptor family. NR3 subfamily. In terms of assembly, binds DNA as a homodimer. Part of a ternary complex containing AR, EFCAB6/DJBP and PARK7. Interacts with HIPK3 and NR0B2 in the presence of androgen. The ligand binding domain interacts with KAT7/HBO1 in the presence of dihydrotestosterone. Interacts with EFCAB6/DJBP, PQBP1, RANBP9, RBAK, SPDEF, SRA1, TGFB1I1 and RREB1. Interacts with ZMIZ1/ZIMP10 and ZMIZ2/ZMIP7 which both enhance its transactivation activity. Interacts with SLC30A9 and RAD54L2/ARIP4. Interacts with MACROD1 (via macro domain). Interacts via the ligand-binding domain with LXXLL and FXXLF motifs from NCOA1, NCOA2, NCOA3 and MAGEA11. Interacts (via nuclear receptor DNA binding domain and nuclear receptor ligand binding domain) with NCOA4. The AR N-terminal poly-Gln region binds Ran resulting in enhancement of AR-mediated transactivation. Ran-binding decreases as the poly-Gln length increases. Interacts with HIP1 (via coiled coil domain). Interacts (via ligand-binding domain) with TRIM68. Interacts with TNK2. Interacts with USP26. Interacts with RNF6. Interacts (regulated by RNF6 probably through polyubiquitination) with RNF14; regulates AR transcriptional activity. Interacts with PRMT2 and TRIM24. Interacts with RACK1. Interacts with RANBP10; this interaction enhances dihydrotestosterone-induced AR transcriptional activity. Interacts with PRPF6 in a hormone-independent way; this interaction enhances dihydrotestosterone-induced AR transcriptional activity. Interacts with STK4/MST1. Interacts with ZIPK/DAPK3. Interacts with LPXN. Interacts with MAK. Part of a complex containing AR, MAK and NCOA3. Interacts with CRY1. Interacts with CCAR1 and GATA2. Interacts with ZNF318. Interacts with BUD31. Interacts with ARID4A. Interacts with ARID4B. Interacts (via NR LBD domain) with ZBTB7A; the interaction is direct and androgen-dependent. Interacts with NCOR1. Interacts with NCOR2. Interacts with CRY2 in a ligand-dependent manner. In terms of processing, phosphorylated in prostate cancer cells in response to several growth factors including EGF. Phosphorylation is induced by c-Src kinase (CSK). Tyr-510 is one of the major phosphorylation sites and an increase in phosphorylation and Src kinase activity is associated with prostate cancer progression. Phosphorylation by TNK2 enhances the DNA-binding and transcriptional activity. Phosphorylation at Ser-65 by CDK9 regulates AR promoter selectivity and cell growth. Sumoylated on Lys-371 (major) and Lys-496. Ubiquitinated. Deubiquitinated by USP26. 'Lys-6' and 'Lys-27'-linked polyubiquitination by RNF6 modulates AR transcriptional activity and specificity. Post-translationally, palmitoylated by ZDHHC7 and ZDHHC21. Palmitoylation is required for plasma membrane targeting and for rapid intracellular signaling via ERK and AKT kinases and cAMP generation.

Its subcellular location is the nucleus. It localises to the cytoplasm. Its function is as follows. Steroid hormone receptors are ligand-activated transcription factors that regulate eukaryotic gene expression and affect cellular proliferation and differentiation in target tissues. Transcription factor activity is modulated by bound coactivator and corepressor proteins like ZBTB7A that recruits NCOR1 and NCOR2 to the androgen response elements/ARE on target genes, negatively regulating androgen receptor signaling and androgen-induced cell proliferation. Transcription activation is also down-regulated by NR0B2. Activated, but not phosphorylated, by HIPK3 and ZIPK/DAPK3. In Macaca mulatta (Rhesus macaque), this protein is Androgen receptor (AR).